The primary structure comprises 838 residues: MGELFRSEEMTLAQLFLQSEAAYCCVSELEELGKVQFRDLNPDVNVFQRKFVNEVRRCEEMDRKLRFVEKEIRKANIPIMDTGENPEVPFPRDMIDLEANFEKIENELKEINTNQEALKRNFLELTELKFILRKTQQFFDEMADPDLLEESSSLLEPNEMGRGAPLRLGFVAGVINRERIPTFERMLWRVCRGNVFLRQAEIENPLEDPVTGDYVHKSVFIIFFQGDQLKNRVKKICEGFRASLYPCPETPQERKEMASGVNTRIDDLQMVLNQTEDHRQRVLQAAAKNIRVWFIKVRKMKAIYHTLNLCNIDVTQKCLIAEVWCPVTDLDSIQFALRRGTEHSGSTVPSILNRMQTNQTPPTYNKTNKFTHGFQNIVDAYGIGTYREINPAPYTVITFPFLFAVMFGDFGHGILMTLFAVWMVLRESRILSQKNENEMFSMVFSGRYIILLMGLFSIYTGLIYNDCFSKSLNIFGSSWSVRPMFTIGNWTEETLLGSSVLQLNPAIPGVFGGPYPFGIDPIWNIATNKLTFLNSFKMKMSVILGIIHMLFGVSLSLFNHIYFKKPLNIYFGFIPEIIFMSSLFGYLVILIFYKWTAYDAHSSRNAPSLLIHFINMFLFSYPESGNAMLYSGQKGIQCFLIVVAMLCVPWMLLFKPLILRHQYLRKKHLGTLNFGGIRVGNGPTEEDAEIIQHDQLSTHSEDAEEPTEDEVFDFGDTMVHQAIHTIEYCLGCISNTASYLRLWALSLAHAQLSEVLWTMVIHIGLHVRSLAGGLGLFFIFAAFATLTVAILLIMEGLSAFLHALRLHWVEFQNKFYTGTGFKFLPFSFEHIREGKFDE.

At 1 to 388 (MGELFRSEEM…DAYGIGTYRE (388 aa)) the chain is on the cytoplasmic side. A phosphothreonine mark is found at Thr250 and Thr360. Tyr364 carries the post-translational modification Phosphotyrosine. A helical membrane pass occupies residues 389 to 407 (INPAPYTVITFPFLFAVMF). Residues 408–409 (GD) are Vacuolar-facing. A helical transmembrane segment spans residues 410–426 (FGHGILMTLFAVWMVLR). Over 427 to 441 (ESRILSQKNENEMFS) the chain is Cytoplasmic. The chain crosses the membrane as a helical span at residues 442 to 471 (MVFSGRYIILLMGLFSIYTGLIYNDCFSKS). At 472 to 535 (LNIFGSSWSV…ATNKLTFLNS (64 aa)) the chain is on the vacuolar side. Residues 536–555 (FKMKMSVILGIIHMLFGVSL) form a helical membrane-spanning segment. At 556–573 (SLFNHIYFKKPLNIYFGF) the chain is on the cytoplasmic side. A helical membrane pass occupies residues 574-594 (IPEIIFMSSLFGYLVILIFYK). Topologically, residues 595–639 (WTAYDAHSSRNAPSLLIHFINMFLFSYPESGNAMLYSGQKGIQCF) are vacuolar. The chain crosses the membrane as a helical span at residues 640–659 (LIVVAMLCVPWMLLFKPLIL). Residues 660–725 (RHQYLRKKHL…DTMVHQAIHT (66 aa)) lie on the Cytoplasmic side of the membrane. A helical transmembrane segment spans residues 726–750 (IEYCLGCISNTASYLRLWALSLAHA). The Vacuolar portion of the chain corresponds to 751-771 (QLSEVLWTMVIHIGLHVRSLA). A helical membrane pass occupies residues 772–810 (GGLGLFFIFAAFATLTVAILLIMEGLSAFLHALRLHWVE). Over 811 to 838 (FQNKFYTGTGFKFLPFSFEHIREGKFDE) the chain is Cytoplasmic.

Belongs to the V-ATPase 116 kDa subunit family. As to quaternary structure, V-ATPase is a heteromultimeric enzyme made up of two complexes: the ATP-hydrolytic V1 complex and the proton translocation V0 complex. The V1 complex consists of three catalytic AB heterodimers that form a heterohexamer, three peripheral stalks each consisting of EG heterodimers, one central rotor including subunits D and F, and the regulatory subunits C and H. The proton translocation complex V0 consists of the proton transport subunit a, a ring of proteolipid subunits c9c'', rotary subunit d, subunits e and f, and the accessory subunits ATP6AP1/Ac45 and ATP6AP2/PRR. Interacts with SPAAR. As to expression, expressed in brain (at protein level). Expressed in heart, kidney, liver, spleen, and to a lesser extent in brain.

It is found in the cytoplasmic vesicle. Its subcellular location is the clathrin-coated vesicle membrane. It localises to the secretory vesicle. The protein localises to the synaptic vesicle membrane. The protein resides in the melanosome. Its function is as follows. Subunit of the V0 complex of vacuolar(H+)-ATPase (V-ATPase), a multisubunit enzyme composed of a peripheral complex (V1) that hydrolyzes ATP and a membrane integral complex (V0) that translocates protons. V-ATPase is responsible for the acidification of various organelles, such as lysosomes, endosomes, the trans-Golgi network, and secretory granules, including synaptic vesicles. In certain cell types, can be exported to the plasma membrane, where it is involved in the acidification of the extracellular environment. Required for assembly and activity of the vacuolar ATPase. Through its action on compartment acidification, plays an essential role in neuronal development in terms of integrity and connectivity of neurons. This chain is V-type proton ATPase 116 kDa subunit a 1 (Atp6v0a1), found in Rattus norvegicus (Rat).